Consider the following 89-residue polypeptide: Small ribosomal subunit protein uS14 (89 aa).

The protein belongs to the universal ribosomal protein uS14 family. In terms of assembly, part of the 30S ribosomal subunit. Contacts proteins S3 and S10.

Binds 16S rRNA, required for the assembly of 30S particles and may also be responsible for determining the conformation of the 16S rRNA at the A site. In Cytophaga hutchinsonii (strain ATCC 33406 / DSM 1761 / CIP 103989 / NBRC 15051 / NCIMB 9469 / D465), this protein is Small ribosomal subunit protein uS14.